Reading from the N-terminus, the 185-residue chain is Ribosome-recycling factor (185 aa).

It belongs to the RRF family.

It is found in the cytoplasm. Its function is as follows. Responsible for the release of ribosomes from messenger RNA at the termination of protein biosynthesis. May increase the efficiency of translation by recycling ribosomes from one round of translation to another. This Wolbachia pipientis subsp. Culex pipiens (strain wPip) protein is Ribosome-recycling factor.